Here is a 506-residue protein sequence, read N- to C-terminus: Maturase K (506 aa).

The protein belongs to the intron maturase 2 family. MatK subfamily.

Its subcellular location is the plastid. It localises to the chloroplast. Functionally, usually encoded in the trnK tRNA gene intron. Probably assists in splicing its own and other chloroplast group II introns. The sequence is that of Maturase K from Cytisus scoparius (Scotch broom).